Here is a 752-residue protein sequence, read N- to C-terminus: Cation-transporting P-type ATPase B (752 aa).

The HMA domain occupies 15-78 (RRIRLDVSGM…VVEKAGYHAA (64 aa)). A metal cation contacts are provided by cysteine 26 and cysteine 29. The next 6 helical transmembrane spans lie at 105–125 (LLVA…FAIV), 132–152 (GWGY…AWPF), 167–187 (METL…SSVF), 201–221 (AILN…VFVL), 361–381 (IAGV…AAWL), and 390–410 (AFSV…GLAT). Aspartate 446 acts as the 4-aspartylphosphate intermediate in catalysis. Residues 714–734 (AIPIAAAGLLNPLIAGAAMAF) form a helical membrane-spanning segment.

It belongs to the cation transport ATPase (P-type) (TC 3.A.3) family. Type IB subfamily.

It is found in the cell membrane. The catalysed reaction is ATP + H2O = ADP + phosphate + H(+). This Mycobacterium bovis (strain ATCC BAA-935 / AF2122/97) protein is Cation-transporting P-type ATPase B (ctpB).